The sequence spans 723 residues: Threonine--tRNA ligase 1, cytoplasmic (723 aa).

Over residues methionine 1–serine 10 the composition is skewed to polar residues. The segment at methionine 1–proline 49 is disordered. Positions methionine 13 to serine 39 are enriched in basic and acidic residues. Serine 39 is subject to Phosphoserine. A TGS domain is found at aspartate 79–lysine 143. Lysine 243 carries the post-translational modification N6-acetyllysine. Residue threonine 246 is modified to Phosphothreonine. Residue tyrosine 298 is modified to Phosphotyrosine. Threonine 453 carries the phosphothreonine modification. Residue serine 702 is modified to Phosphoserine.

The protein belongs to the class-II aminoacyl-tRNA synthetase family. In terms of assembly, homodimer. ISGylated.

It localises to the cytoplasm. The catalysed reaction is tRNA(Thr) + L-threonine + ATP = L-threonyl-tRNA(Thr) + AMP + diphosphate + H(+). In terms of biological role, catalyzes the attachment of threonine to tRNA(Thr) in a two-step reaction: threonine is first activated by ATP to form Thr-AMP and then transferred to the acceptor end of tRNA(Thr). Also edits incorrectly charged tRNA(Thr) via its editing domain, at the post-transfer stage. The protein is Threonine--tRNA ligase 1, cytoplasmic (TARS1) of Bos taurus (Bovine).